The sequence spans 425 residues: Histone-binding protein RBBP7 (425 aa).

The residue at position 2 (A2) is an N-acetylalanine. Position 3 is a phosphoserine (S3). An N6-acetyllysine; alternate modification is found at K4. A Glycyl lysine isopeptide (Lys-Gly) (interchain with G-Cter in SUMO2); alternate cross-link involves residue K4. K4 is covalently cross-linked (Glycyl lysine isopeptide (Lys-Gly) (interchain with G-Cter in ubiquitin); alternate). Phosphothreonine is present on T10. E13 and S95 each carry phosphoserine. WD repeat units follow at residues 47–122 (QWLP…KINH), 128–173 (RARY…LRLR), 181–217 (GLSW…KIVD), 228–269 (VVED…HLVD), 275–312 (VNCL…LHTF), 318–369 (EIFQ…LFIH), and 376–403 (ISDF…IWQM). K101 participates in a covalent cross-link: Glycyl lysine isopeptide (Lys-Gly) (interchain with G-Cter in SUMO2). At K119 the chain carries N6-acetyllysine. K155 participates in a covalent cross-link: Glycyl lysine isopeptide (Lys-Gly) (interchain with G-Cter in SUMO2). K159 bears the N6-acetyllysine; alternate mark. A Glycyl lysine isopeptide (Lys-Gly) (interchain with G-Cter in SUMO2); alternate cross-link involves residue K159. S354 carries the post-translational modification Phosphoserine.

It belongs to the WD repeat RBAP46/RBAP48/MSI1 family. In terms of assembly, binds directly to helix 1 of the histone fold of histone H4, a region that is not accessible when H4 is in chromatin. Subunit of the type B histone acetyltransferase (HAT) complex, composed of RBBP7 and HAT1. Subunit of the core histone deacetylase (HDAC) complex, which is composed of HDAC1, HDAC2, RBBP4 and RBBP7. The core HDAC complex associates with SIN3A, ARID4B/SAP180, SAP18, SAP30, SAP130, SUDS3/SAP45 and possibly ARID4A/RBP1 and ING1 to form the SIN3 HDAC complex. Component of the nucleosome remodeling and deacetylase (NuRD) repressor complex, composed of core proteins MTA1, MTA2, MTA3, RBBP4, RBBP7, HDAC1, HDAC2, MBD2, MBD3, and peripherally associated proteins CDK2AP1, CDK2AP2, GATAD2A, GATAD2B, CHD3, CHD4 and CHD5. The exact stoichiometry of the NuRD complex is unknown, and some subunits such as MBD2 and MBD3, GATAD2A and GATAD2B, and CHD3, CHD4 and CHD5 define mutually exclusive NuRD complexes. The NuRD complex may interact with MBD3L1. The NuRD complex may interact with MBD3L2. Subunit of the PRC2/EED-EZH2 complex, which is composed of at least EED, EZH2, RBBP4, RBBP7 and SUZ12. The PRC2/EED-EZH2 complex may also associate with HDAC1. Component of the NURF-1 ISWI chromatin remodeling complex (also called the nucleosome-remodeling factor (NURF) complex) at least composed of SMARCA1 (isoform 2), BPTF, RBBP4 and RBBP7. Within the complex interacts with isoform 2 of SMARCA1. Component of the BPFT-SMARCA1 complex at least composed of SMARCA1 (isoform 1), BPFT, RBBP4 and RBBP7; the complex is catalytically inactive and does not remodel chromatin. Within the complex interacts with isoform 1 of SMARCA1. Interacts with BRCA1. Interacts with CDK2AP1. Interacts with CENPA. Interacts with CHD3. Interacts with CHD4. Interacts with CREBBP, and this interaction may be enhanced by the binding of phosphorylated CREB1 to CREBBP. Interacts with HDAC7. Interacts with MTA1. Interacts with PWWP2B. Interacts with RB1 (via viral protein-binding domain). Interacts with SUV39H1.

Its subcellular location is the nucleus. In terms of biological role, core histone-binding subunit that may target chromatin remodeling factors, histone acetyltransferases and histone deacetylases to their histone substrates in a manner that is regulated by nucleosomal DNA. Component of several complexes which regulate chromatin metabolism. These include the type B histone acetyltransferase (HAT) complex, which is required for chromatin assembly following DNA replication; the core histone deacetylase (HDAC) complex, which promotes histone deacetylation and consequent transcriptional repression; the nucleosome remodeling and histone deacetylase complex (the NuRD complex), which promotes transcriptional repression by histone deacetylation and nucleosome remodeling; and the PRC2/EED-EZH2 complex, which promotes repression of homeotic genes during development; and the NURF (nucleosome remodeling factor) complex. This Homo sapiens (Human) protein is Histone-binding protein RBBP7 (RBBP7).